Consider the following 114-residue polypeptide: Iron-sulfur cluster insertion protein ErpA (114 aa).

Iron-sulfur cluster is bound by residues cysteine 42, cysteine 106, and cysteine 108.

Belongs to the HesB/IscA family. As to quaternary structure, homodimer. The cofactor is iron-sulfur cluster.

Required for insertion of 4Fe-4S clusters for at least IspG. This is Iron-sulfur cluster insertion protein ErpA from Klebsiella pneumoniae subsp. pneumoniae (strain ATCC 700721 / MGH 78578).